A 716-amino-acid polypeptide reads, in one-letter code: Antibacterial effector protein Tle3 (716 aa).

Residues 68–87 (PTLPGGQANPGYLTPAGYSL) are disordered.

As to quaternary structure, interacts in the cytoplasm with the adapter protein Tla3. Interacts in the periplasm with the immunity protein Tli3.

Its subcellular location is the secreted. It localises to the host periplasm. With respect to regulation, neutralized by the immunity protein Tli3 in the periplasm of P.aeruginosa cells. Antibacterial effector. Is toxic once delivered in the periplasm of prey bacteria. The protein is Antibacterial effector protein Tle3 of Pseudomonas aeruginosa (strain ATCC 15692 / DSM 22644 / CIP 104116 / JCM 14847 / LMG 12228 / 1C / PRS 101 / PAO1).